Here is a 219-residue protein sequence, read N- to C-terminus: Endo-type membrane-bound lytic murein transglycosylase A-like protein (219 aa).

Belongs to the transglycosylase Slt family.

It catalyses the reaction Endolytic cleavage of the (1-&gt;4)-beta-glycosidic linkage between N-acetylmuramic acid (MurNAc) and N-acetylglucosamine (GlcNAc) residues in peptidoglycan with concomitant formation of a 1,6-anhydrobond in the MurNAc residue.. Functionally, murein-degrading enzyme. May play a role in recycling of muropeptides during cell elongation and/or cell division (Potential). In Shigella flexneri, this protein is Endo-type membrane-bound lytic murein transglycosylase A-like protein.